The chain runs to 273 residues: 2,3,4,5-tetrahydropyridine-2,6-dicarboxylate N-succinyltransferase (273 aa).

Arg-104 and Asp-141 together coordinate substrate.

It belongs to the transferase hexapeptide repeat family. Homotrimer.

Its subcellular location is the cytoplasm. It carries out the reaction (S)-2,3,4,5-tetrahydrodipicolinate + succinyl-CoA + H2O = (S)-2-succinylamino-6-oxoheptanedioate + CoA. The protein operates within amino-acid biosynthesis; L-lysine biosynthesis via DAP pathway; LL-2,6-diaminopimelate from (S)-tetrahydrodipicolinate (succinylase route): step 1/3. This chain is 2,3,4,5-tetrahydropyridine-2,6-dicarboxylate N-succinyltransferase, found in Blochmanniella pennsylvanica (strain BPEN).